The sequence spans 422 residues: UDP-N-acetylglucosamine 1-carboxyvinyltransferase (422 aa).

A phosphoenolpyruvate-binding site is contributed by 22-23; that stretch reads KN. Position 93 (arginine 93) interacts with UDP-N-acetyl-alpha-D-glucosamine. Cysteine 117 (proton donor) is an active-site residue. At cysteine 117 the chain carries 2-(S-cysteinyl)pyruvic acid O-phosphothioketal. Residues 122-126, aspartate 309, and isoleucine 331 contribute to the UDP-N-acetyl-alpha-D-glucosamine site; that span reads RPVDQ.

Belongs to the EPSP synthase family. MurA subfamily.

It is found in the cytoplasm. It catalyses the reaction phosphoenolpyruvate + UDP-N-acetyl-alpha-D-glucosamine = UDP-N-acetyl-3-O-(1-carboxyvinyl)-alpha-D-glucosamine + phosphate. It participates in cell wall biogenesis; peptidoglycan biosynthesis. Its function is as follows. Cell wall formation. Adds enolpyruvyl to UDP-N-acetylglucosamine. This chain is UDP-N-acetylglucosamine 1-carboxyvinyltransferase, found in Delftia acidovorans (strain DSM 14801 / SPH-1).